A 253-amino-acid chain; its full sequence is MEWTDDGIVLGVRRHGESSAIVELLTRGHGRHLGLVRGGAGSRMRPLLQPGNSVSALWRARLDEHLGAYALEGTRMRAANLLGASHATYGVTHLASLARLLPERDPHDGIFERLERTLDDFDTAGEAAIHLIRFELAMLTELGFGLDLSTCVATGTTTELIYVSPKSGGAVSRQAGEPWRDRLLRLPPFLREADEEQSGWSDQDLLDGFELTGRFLLRHVLEPRGQGHSDARAGFINAVVKHQARASAAAISG.

The protein belongs to the RecO family.

Functionally, involved in DNA repair and RecF pathway recombination. In Nitrobacter hamburgensis (strain DSM 10229 / NCIMB 13809 / X14), this protein is DNA repair protein RecO.